The sequence spans 74 residues: UPF0741 protein BcerKBAB4_5177 (74 aa).

Belongs to the UPF0741 family.

This Bacillus mycoides (strain KBAB4) (Bacillus weihenstephanensis) protein is UPF0741 protein BcerKBAB4_5177.